Here is a 509-residue protein sequence, read N- to C-terminus: uncharacterized protein (509 aa).

The protein belongs to the MG032/MG096/MG288 family.

This is an uncharacterized protein from Mycoplasma pneumoniae (strain ATCC 29342 / M129 / Subtype 1) (Mycoplasmoides pneumoniae).